Consider the following 371-residue polypeptide: Putative glutamate--cysteine ligase 2 (371 aa).

Belongs to the glutamate--cysteine ligase type 2 family. YbdK subfamily. In terms of assembly, homodimer.

It carries out the reaction L-cysteine + L-glutamate + ATP = gamma-L-glutamyl-L-cysteine + ADP + phosphate + H(+). Its function is as follows. ATP-dependent carboxylate-amine ligase which exhibits weak glutamate--cysteine ligase activity. In Klebsiella pneumoniae (strain 342), this protein is Putative glutamate--cysteine ligase 2.